The primary structure comprises 412 residues: uncharacterized protein (412 aa).

3 disordered regions span residues Asn-150–Asp-171, Gln-177–Gln-196, and Gln-302–Pro-412. Positions Gln-156 to Gln-168 are enriched in low complexity. Composition is skewed to polar residues over residues Gln-177 to Ser-187 and Met-310 to Ile-321. Residues Gly-335–Asn-345 are compositionally biased toward low complexity. The span at Val-350–Leu-363 shows a compositional bias: polar residues. Low complexity-rich tracts occupy residues Pro-364–Pro-373 and Thr-381–Pro-394.

This is an uncharacterized protein from Dictyostelium discoideum (Social amoeba).